A 464-amino-acid polypeptide reads, in one-letter code: Cysteine--tRNA ligase (464 aa).

Zn(2+) is bound at residue Cys29. A 'HIGH' region motif is present at residues 31 to 41; sequence ATVQGVPHIGH. The segment at 160–180 is disordered; the sequence is RLDEVQQGESTASGKRDPRDF. Residues Cys208, His233, and Glu237 each contribute to the Zn(2+) site. A 'KMSKS' region motif is present at residues 264 to 268; it reads KMSKS. Lys267 provides a ligand contact to ATP.

The protein belongs to the class-I aminoacyl-tRNA synthetase family. Monomer. Requires Zn(2+) as cofactor.

It is found in the cytoplasm. It carries out the reaction tRNA(Cys) + L-cysteine + ATP = L-cysteinyl-tRNA(Cys) + AMP + diphosphate. This Saccharopolyspora erythraea (strain ATCC 11635 / DSM 40517 / JCM 4748 / NBRC 13426 / NCIMB 8594 / NRRL 2338) protein is Cysteine--tRNA ligase.